Consider the following 110-residue polypeptide: uncharacterized protein (110 aa).

The interval 85–110 (ARKAERPSQGGKDYNGTAKSAQSTTV) is disordered. Residues 101 to 110 (TAKSAQSTTV) show a composition bias toward polar residues.

This is an uncharacterized protein from Saccharomyces cerevisiae (strain ATCC 204508 / S288c) (Baker's yeast).